The following is a 255-amino-acid chain: tRNA (guanine-N(1)-)-methyltransferase (255 aa).

S-adenosyl-L-methionine is bound by residues G113 and 133–138 (IGDYVL).

Belongs to the RNA methyltransferase TrmD family. As to quaternary structure, homodimer.

Its subcellular location is the cytoplasm. It catalyses the reaction guanosine(37) in tRNA + S-adenosyl-L-methionine = N(1)-methylguanosine(37) in tRNA + S-adenosyl-L-homocysteine + H(+). In terms of biological role, specifically methylates guanosine-37 in various tRNAs. The chain is tRNA (guanine-N(1)-)-methyltransferase from Shigella flexneri serotype 5b (strain 8401).